The primary structure comprises 565 residues: Proline--tRNA ligase (565 aa).

The protein belongs to the class-II aminoacyl-tRNA synthetase family. ProS type 1 subfamily. As to quaternary structure, homodimer.

It localises to the cytoplasm. It catalyses the reaction tRNA(Pro) + L-proline + ATP = L-prolyl-tRNA(Pro) + AMP + diphosphate. In terms of biological role, catalyzes the attachment of proline to tRNA(Pro) in a two-step reaction: proline is first activated by ATP to form Pro-AMP and then transferred to the acceptor end of tRNA(Pro). As ProRS can inadvertently accommodate and process non-cognate amino acids such as alanine and cysteine, to avoid such errors it has two additional distinct editing activities against alanine. One activity is designated as 'pretransfer' editing and involves the tRNA(Pro)-independent hydrolysis of activated Ala-AMP. The other activity is designated 'posttransfer' editing and involves deacylation of mischarged Ala-tRNA(Pro). The misacylated Cys-tRNA(Pro) is not edited by ProRS. In Francisella tularensis subsp. tularensis (strain WY96-3418), this protein is Proline--tRNA ligase.